We begin with the raw amino-acid sequence, 380 residues long: MIISASTDYRAAAQAKLPPFLFHYIDGGAYAEHTLRRNTEDLAGIALRQRILRNMSDLSLETSLFGEKLAMPVILGPVGLTGMYARRGEVQAAKAAAQKGIPFTLSTVSVCPIEEVAPAIDRPMWFQLYVLKDRGFMRNALERAKAAGVKTLVFTVDMPVPGARYRDAHSGMSGPNAAVRRMLQAVTHPQWAWDVGLCGKPHDLGNVSAYRGKPTSLEDYIGWLGTNFDPSISWKDLDWIREFWQGPMIIKGILDPEDAKDAVRFGADGIVVSNHGGRQLDGVLSTAHALPAIAEAVKGDITLLADSGIRSGLDVVRMIALGADGVLLGRAFAYALAAAGQAGVANLLELIDKEMRVAMTLIGAKTIADISADSLVQGLR.

An FMN hydroxy acid dehydrogenase domain is found at 1–380 (MIISASTDYR…SADSLVQGLR (380 aa)). Substrate is bound at residue Tyr24. FMN-binding residues include Ser106 and Gln127. Residue Tyr129 coordinates substrate. Residue Thr155 coordinates FMN. Position 164 (Arg164) interacts with substrate. FMN is bound at residue Lys251. His275 acts as the Proton acceptor in catalysis. Arg278 lines the substrate pocket. 306–330 (DSGIRSGLDVVRMIALGADGVLLGR) serves as a coordination point for FMN.

This sequence belongs to the FMN-dependent alpha-hydroxy acid dehydrogenase family. It depends on FMN as a cofactor.

It localises to the cell inner membrane. It carries out the reaction (S)-lactate + A = pyruvate + AH2. In terms of biological role, catalyzes the conversion of L-lactate to pyruvate. Is coupled to the respiratory chain. The chain is L-lactate dehydrogenase from Serratia proteamaculans (strain 568).